A 239-amino-acid polypeptide reads, in one-letter code: EF-hand domain-containing protein D1 (239 aa).

A compositionally biased stretch (basic and acidic residues) spans 1-18 (MASEELACKLERRLRREE). Residues 1–53 (MASEELACKLERRLRREEAEESGPQLAPLGAPAPEPKPEPEPPARAPTASADA) are disordered. EF-hand domains lie at 90–125 (RLIKDLESMFKLYDAGRDGFIDLMELKLMMEKLGAP) and 126–161 (QTHLGLKSMIKEVDEDFDGKLSFREFLLIFHKAAAG). The Ca(2+) site is built by Asp-103, Asp-107, Glu-114, Asp-139, Asp-141, Asp-143, Lys-145, and Glu-150. Position 201 is a phosphoserine (Ser-201).

The protein localises to the mitochondrion inner membrane. In terms of biological role, acts as a calcium sensor for mitochondrial flash (mitoflash) activation, an event characterized by stochastic bursts of superoxide production. May play a role in neuronal differentiation. The protein is EF-hand domain-containing protein D1 (EFHD1) of Homo sapiens (Human).